Here is a 109-residue protein sequence, read N- to C-terminus: T-cell surface glycoprotein CD1b (109 aa).

Residues 1–18 form the signal peptide; the sequence is MLLLPLLLLAGRFPGGDN. Asn38 and Asn75 each carry an N-linked (GlcNAc...) asparagine glycan.

Heterodimer with B2M (beta-2-microglobulin). Interacts with saposin C. As to expression, expressed on cortical thymocytes, on certain T-cell leukemias, and in various other tissues.

The protein localises to the cell membrane. The protein resides in the endosome membrane. It is found in the lysosome membrane. Antigen-presenting protein that binds self and non-self lipid and glycolipid antigens and presents them to T-cell receptors on natural killer T-cells. The chain is T-cell surface glycoprotein CD1b (CD1B) from Oryctolagus cuniculus (Rabbit).